We begin with the raw amino-acid sequence, 479 residues long: UDP-glycosyltransferase 85A5 (479 aa).

Residues Ser-301, 358–360 (CPQ), 375–383 (HSGWNSTLE), and 397–400 (FAEQ) contribute to the UDP-alpha-D-glucose site.

Belongs to the UDP-glycosyltransferase family. As to expression, expressed in roots, shoots and leaves.

This Arabidopsis thaliana (Mouse-ear cress) protein is UDP-glycosyltransferase 85A5 (UGT85A5).